The sequence spans 396 residues: Elongation factor Tu (396 aa).

Positions 10-206 (KPHVNVGTIG…ALDTYIPTPE (197 aa)) constitute a tr-type G domain. Residues 19-26 (GHVDHGKT) are G1. GTP is bound at residue 19–26 (GHVDHGKT). Position 26 (threonine 26) interacts with Mg(2+). Residues 60–64 (GITIN) form a G2 region. The tract at residues 81–84 (DCPG) is G3. Residues 81 to 85 (DCPGH) and 136 to 139 (NKAD) each bind GTP. The tract at residues 136–139 (NKAD) is G4. Residues 174 to 176 (SAK) form a G5 region.

The protein belongs to the TRAFAC class translation factor GTPase superfamily. Classic translation factor GTPase family. EF-Tu/EF-1A subfamily. As to quaternary structure, monomer.

It is found in the cytoplasm. It catalyses the reaction GTP + H2O = GDP + phosphate + H(+). GTP hydrolase that promotes the GTP-dependent binding of aminoacyl-tRNA to the A-site of ribosomes during protein biosynthesis. This is Elongation factor Tu from Janthinobacterium sp. (strain Marseille) (Minibacterium massiliensis).